The chain runs to 155 residues: Small ribosomal subunit protein eS19B (155 aa).

Belongs to the eukaryotic ribosomal protein eS19 family.

This chain is Small ribosomal subunit protein eS19B (RpS19b), found in Drosophila melanogaster (Fruit fly).